The primary structure comprises 484 residues: MAASGDPGSAESYRSPLAARYASREMCFLFSDRYKFQTWRQLWLWLAEAEQTLGLPITDEQIQEMKSNLNNIDFQMAAEEEKRLRHDVMAHVHTFGHCCPKAAGIIHLGATSCYVGDNTDLIILRNAFDLLLPKLARVISRLADFAKDRADLPTLGFTHFQPAQLTTVGKRCCLWIQDLCMDLQNLKRVRDELRFRGVKGTTGTQASFLQLFEGDHQKVEQLDKMVTEKAGFKRAFIITGQTYTRKVDIEVLSVLASLGASVHKICTDIRLLANLKEMEEPFEKQQIGSSAMPYKRNPMRSERCCSLARHLMALTMDPLQTASVQWFERTLDDSANRRICLAEAFLTADTILNTLQNISEGLVVYPKVIERRIRQELPFMATENIIMAMVKAGGSRQDCHEKIRVLSQQAAAVVKQEGGDNDLIERIRADAYFSPIHSQLEHLLDPSSFTGRAPQQVHRFLEEEVRPLLKPYGNEMAVKAELCL.

Alanine 2 is subject to N-acetylalanine. Substrate-binding positions include 20 to 21, 85 to 87, and 111 to 112; these read RY, RHD, and TS. Lysine 147 bears the N6-acetyllysine mark. The active-site Proton donor/acceptor is the histidine 159. Glutamine 241 contributes to the substrate binding site. The active-site Proton donor/acceptor is the serine 289. Position 295 is an N6-acetyllysine (lysine 295). Positions 303, 329, 334, and 338 each coordinate substrate. A Glycyl lysine isopeptide (Lys-Gly) (interchain with G-Cter in SUMO1) cross-link involves residue lysine 415.

It belongs to the lyase 1 family. Adenylosuccinate lyase subfamily. In terms of assembly, homotetramer. Residues from neighboring subunits contribute catalytic and substrate-binding residues to each active site.

The catalysed reaction is N(6)-(1,2-dicarboxyethyl)-AMP = fumarate + AMP. The enzyme catalyses (2S)-2-[5-amino-1-(5-phospho-beta-D-ribosyl)imidazole-4-carboxamido]succinate = 5-amino-1-(5-phospho-beta-D-ribosyl)imidazole-4-carboxamide + fumarate. Its pathway is purine metabolism; AMP biosynthesis via de novo pathway; AMP from IMP: step 2/2. It participates in purine metabolism; IMP biosynthesis via de novo pathway; 5-amino-1-(5-phospho-D-ribosyl)imidazole-4-carboxamide from 5-amino-1-(5-phospho-D-ribosyl)imidazole-4-carboxylate: step 2/2. Its function is as follows. Catalyzes two non-sequential steps in de novo AMP synthesis: converts (S)-2-(5-amino-1-(5-phospho-D-ribosyl)imidazole-4-carboxamido)succinate (SAICAR) to fumarate plus 5-amino-1-(5-phospho-D-ribosyl)imidazole-4-carboxamide, and thereby also contributes to de novo IMP synthesis, and converts succinyladenosine monophosphate (SAMP) to AMP and fumarate. This is Adenylosuccinate lyase (Adsl) from Mus musculus (Mouse).